The sequence spans 278 residues: Large ribosomal subunit protein uL2 (278 aa).

Disordered regions lie at residues 1–59 (MAIR…GGHK) and 222–278 (RGAA…NKKR). A compositionally biased stretch (polar residues) spans 16–27 (SSVSEFSEITRS). Composition is skewed to basic residues over residues 45–59 (VHGH…GGHK) and 269–278 (VRRRRPNKKR).

Belongs to the universal ribosomal protein uL2 family. Part of the 50S ribosomal subunit. Forms a bridge to the 30S subunit in the 70S ribosome.

In terms of biological role, one of the primary rRNA binding proteins. Required for association of the 30S and 50S subunits to form the 70S ribosome, for tRNA binding and peptide bond formation. It has been suggested to have peptidyltransferase activity; this is somewhat controversial. Makes several contacts with the 16S rRNA in the 70S ribosome. This is Large ribosomal subunit protein uL2 from Corynebacterium urealyticum (strain ATCC 43042 / DSM 7109).